Reading from the N-terminus, the 396-residue chain is MQKLVILGSTGSIGKSTLSVVDNNPEQYQVFALVGGKNVELITEQCQQYQPRFVALDDEQAAAKLKENLTALGLKIEVLAGQKAIYELASHPEVDMVMAAIVGAAGLLPTLSAVQAGKKVLLANKESLVTCGQIFIDEARKSGAKLLPVDSEHNAIFQSLPPEAQEKVGFCPLAELGVSKIILTGSGGPFCTKPLNEFSQITPAQAVAHPNWSMGKKISVDSATMMNKGLEYIEARWLFNASADEMEIIIHPQSIIHSMVRYIDGSVIAQMGNPDMRTPIAHTMAYPNRIYAGVAPLDFFKLKELTFIEPDFARYPNLKLAIEAFAEGQYATTAMNAANEIAVEAFLNDQIRFTDIVEVNRQVVENIAPVQVKEIADVLHIDKLAREVAKQHILQF.

NADPH is bound by residues Thr-10, Gly-11, Ser-12, Ile-13, Gly-36, Lys-37, Asn-38, and Asn-124. Lys-125 provides a ligand contact to 1-deoxy-D-xylulose 5-phosphate. Glu-126 is a binding site for NADPH. Asp-150 is a Mn(2+) binding site. Residues Ser-151, Glu-152, Ser-186, and His-209 each contribute to the 1-deoxy-D-xylulose 5-phosphate site. Residue Glu-152 coordinates Mn(2+). Gly-215 lines the NADPH pocket. Residues Ser-222, Asn-227, Lys-228, and Glu-231 each contribute to the 1-deoxy-D-xylulose 5-phosphate site. Residue Glu-231 coordinates Mn(2+).

The protein belongs to the DXR family. Mg(2+) is required as a cofactor. It depends on Mn(2+) as a cofactor.

The enzyme catalyses 2-C-methyl-D-erythritol 4-phosphate + NADP(+) = 1-deoxy-D-xylulose 5-phosphate + NADPH + H(+). Its pathway is isoprenoid biosynthesis; isopentenyl diphosphate biosynthesis via DXP pathway; isopentenyl diphosphate from 1-deoxy-D-xylulose 5-phosphate: step 1/6. Functionally, catalyzes the NADPH-dependent rearrangement and reduction of 1-deoxy-D-xylulose-5-phosphate (DXP) to 2-C-methyl-D-erythritol 4-phosphate (MEP). The polypeptide is 1-deoxy-D-xylulose 5-phosphate reductoisomerase (Glaesserella parasuis serovar 5 (strain SH0165) (Haemophilus parasuis)).